The primary structure comprises 137 residues: L-ectoine synthase (137 aa).

The segment at 115–137 is disordered; the sequence is EVHDESGAYPADPELAREPVAAD.

The protein belongs to the ectoine synthase family.

The catalysed reaction is (2S)-4-acetamido-2-aminobutanoate = L-ectoine + H2O. The protein operates within amine and polyamine biosynthesis; ectoine biosynthesis; L-ectoine from L-aspartate 4-semialdehyde: step 3/3. Functionally, catalyzes the circularization of gamma-N-acetyl-alpha,gamma-diaminobutyric acid (ADABA) to ectoine (1,4,5,6-tetrahydro-2-methyl-4-pyrimidine carboxylic acid), which is an excellent osmoprotectant. This Sphingopyxis alaskensis (strain DSM 13593 / LMG 18877 / RB2256) (Sphingomonas alaskensis) protein is L-ectoine synthase.